A 265-amino-acid polypeptide reads, in one-letter code: Mlc titration factor A (265 aa).

Residues H111, H148, H152, and E211 each coordinate Zn(2+).

Belongs to the MtfA family. In terms of assembly, interacts with Mlc. Requires Zn(2+) as cofactor.

The protein localises to the cytoplasm. Its function is as follows. Involved in the modulation of the activity of the glucose-phosphotransferase system (glucose-PTS). Interacts with the transcriptional repressor Mlc, preventing its interaction with DNA and leading to the modulation of expression of genes regulated by Mlc, including ptsG, which encodes the PTS system glucose-specific EIICB component. In terms of biological role, shows zinc-dependent metallopeptidase activity. The chain is Mlc titration factor A from Shigella dysenteriae serotype 1 (strain Sd197).